Reading from the N-terminus, the 235-residue chain is Protein RESISTANCE TO PHYTOPHTHORA 1, chloroplastic (235 aa).

A chloroplast-targeting transit peptide spans 1 to 43 (MNSATTMSASVLNYQILKFFPPQKNGFLKSPLIRGKICRFCVS). Residues 53–66 (VIEDPKEETQEKSD) show a composition bias toward basic and acidic residues. The tract at residues 53-92 (VIEDPKEETQEKSDGVIVNSTEEEEERSGENSTSTGPSTV) is disordered. Helical transmembrane passes span 131–151 (FEVQAYASMLIGGALSFNLIF), 158–178 (IWRLMGMWSIWMFTIPSLRAR), 188–208 (LNYLFLLVPLLNVAIPFFLKS), and 211–231 (VVWSADTVAFLGMYAWKLGWL).

The protein localises to the plastid. It localises to the chloroplast. Its subcellular location is the membrane. Functionally, plays a positive role in the immune response to the oomycetes P.infestans, including induced oxidative burst and enhanced expression of defense-related genes. The polypeptide is Protein RESISTANCE TO PHYTOPHTHORA 1, chloroplastic (Solanum tuberosum (Potato)).